The sequence spans 225 residues: UPF0758 protein XAC3915 (225 aa).

Residues 102–224 enclose the MPN domain; sequence ALSDPPSVGR…PVSFAERGWL (123 aa). His173, His175, and Asp186 together coordinate Zn(2+). Positions 173 to 186 match the JAMM motif motif; that stretch reads HNHPSGNPEPSEAD.

This sequence belongs to the UPF0758 family.

The chain is UPF0758 protein XAC3915 from Xanthomonas axonopodis pv. citri (strain 306).